The following is a 332-amino-acid chain: Ribosomal RNA small subunit methyltransferase H (332 aa).

S-adenosyl-L-methionine is bound by residues G36–H38, D61, F88, D114, and Q121.

This sequence belongs to the methyltransferase superfamily. RsmH family.

It is found in the cytoplasm. The enzyme catalyses cytidine(1402) in 16S rRNA + S-adenosyl-L-methionine = N(4)-methylcytidine(1402) in 16S rRNA + S-adenosyl-L-homocysteine + H(+). Its function is as follows. Specifically methylates the N4 position of cytidine in position 1402 (C1402) of 16S rRNA. The polypeptide is Ribosomal RNA small subunit methyltransferase H (Pelodictyon phaeoclathratiforme (strain DSM 5477 / BU-1)).